We begin with the raw amino-acid sequence, 385 residues long: Circadian-associated transcriptional repressor (385 aa).

The segment covering 1 to 26 (MDSPSSVSSYSSYSLSSSFPTSPVNS) has biased composition (low complexity). Disordered stretches follow at residues 1–108 (MDSP…SLNT), 203–233 (GGGK…EKMD), and 365–385 (GHRE…LLNL). Basic and acidic residues predominate over residues 33-45 (DSEREDKGAHGPR). A compositionally biased stretch (polar residues) spans 70–79 (VSGNQHTPSH).

Interacts with PER2, CRY2, BHLHE41, HDAC1 and NR3C1. Interacts with BMAL1.

The protein resides in the nucleus. It is found in the PML body. Functionally, transcriptional repressor which forms a negative regulatory component of the circadian clock and acts independently of the circadian transcriptional repressors: CRY1, CRY2 and BHLHE41. In a histone deacetylase-dependent manner represses the transcriptional activator activity of the CLOCK-BMAL1 heterodimer. Abrogates the interaction of BMAL1 with the transcriptional coactivator CREBBP and can repress the histone acetyl-transferase activity of the CLOCK-BMAL1 heterodimer, reducing histone acetylation of its target genes. Rhythmically binds the E-box elements (5'-CACGTG-3') on circadian gene promoters and its occupancy shows circadian oscillation antiphasic to BMAL1. Interacts with the glucocorticoid receptor (NR3C1) and contributes to the repressive function in the glucocorticoid response. The polypeptide is Circadian-associated transcriptional repressor (CIART) (Homo sapiens (Human)).